The following is a 242-amino-acid chain: Endothelial protein C receptor (242 aa).

The first 17 residues, 1–17 (MLTKFLPLLLLLLPGCA), serve as a signal peptide directing secretion. Topologically, residues 18–214 (LCNSDGSQSL…GSQTGRSYTS (197 aa)) are extracellular. 5 N-linked (GlcNAc...) asparagine glycosylation sites follow: asparagine 46, asparagine 63, asparagine 140, asparagine 166, and asparagine 176. Cystine bridges form between cysteine 119–cysteine 190 and cysteine 223–cysteine 236. The helical transmembrane segment at 215 to 235 (LVLGILMGCFIIAGVAVGIFM) threads the bilayer. Topologically, residues 236-242 (CTSGRRC) are cytoplasmic.

In terms of tissue distribution, expressed in endothelial cells.

The protein localises to the membrane. Its function is as follows. Binds activated protein C. Enhances protein C activation by the thrombin-thrombomodulin complex; plays a role in the protein C pathway controlling blood coagulation. This chain is Endothelial protein C receptor (Procr), found in Mus musculus (Mouse).